We begin with the raw amino-acid sequence, 255 residues long: Octanoyltransferase (255 aa).

Positions 1–27 (MPPASDAHAAPDAAASTSASPQSCAAP) are disordered. The BPL/LPL catalytic domain maps to 59-240 (PDTGDEIWVV…RLIANLDGAT (182 aa)). Residues 99 to 106 (RGGQITYH), 171 to 173 (ALG), and 184 to 186 (GLS) contribute to the substrate site. Cys202 (acyl-thioester intermediate) is an active-site residue.

This sequence belongs to the LipB family.

Its subcellular location is the cytoplasm. The enzyme catalyses octanoyl-[ACP] + L-lysyl-[protein] = N(6)-octanoyl-L-lysyl-[protein] + holo-[ACP] + H(+). Its pathway is protein modification; protein lipoylation via endogenous pathway; protein N(6)-(lipoyl)lysine from octanoyl-[acyl-carrier-protein]: step 1/2. Its function is as follows. Catalyzes the transfer of endogenously produced octanoic acid from octanoyl-acyl-carrier-protein onto the lipoyl domains of lipoate-dependent enzymes. Lipoyl-ACP can also act as a substrate although octanoyl-ACP is likely to be the physiological substrate. This is Octanoyltransferase from Burkholderia thailandensis (strain ATCC 700388 / DSM 13276 / CCUG 48851 / CIP 106301 / E264).